Reading from the N-terminus, the 262-residue chain is Acyl-[acyl-carrier-protein]--UDP-N-acetylglucosamine O-acyltransferase (262 aa).

This sequence belongs to the transferase hexapeptide repeat family. LpxA subfamily. Homotrimer.

The protein localises to the cytoplasm. The enzyme catalyses a (3R)-hydroxyacyl-[ACP] + UDP-N-acetyl-alpha-D-glucosamine = a UDP-3-O-[(3R)-3-hydroxyacyl]-N-acetyl-alpha-D-glucosamine + holo-[ACP]. The protein operates within glycolipid biosynthesis; lipid IV(A) biosynthesis; lipid IV(A) from (3R)-3-hydroxytetradecanoyl-[acyl-carrier-protein] and UDP-N-acetyl-alpha-D-glucosamine: step 1/6. In terms of biological role, involved in the biosynthesis of lipid A, a phosphorylated glycolipid that anchors the lipopolysaccharide to the outer membrane of the cell. This Paraburkholderia xenovorans (strain LB400) protein is Acyl-[acyl-carrier-protein]--UDP-N-acetylglucosamine O-acyltransferase.